The primary structure comprises 161 residues: Nodulation protein N (161 aa).

Residues 9–133 form the MaoC-like domain; the sequence is VPSRIGQELG…LVTTYEVTVE (125 aa).

It to the R.meliloti counterpart.

Its function is as follows. Involved in the production of the root hair deformation (HAD) factor specifically on medicago. This Rhizobium leguminosarum bv. viciae protein is Nodulation protein N (nodN).